We begin with the raw amino-acid sequence, 626 residues long: Transketolase-like protein 2 (626 aa).

Histidine 37 contributes to the substrate binding site. Residues serine 40, histidine 77, and 123–125 (GSL) each bind thiamine diphosphate. A Mg(2+)-binding site is contributed by aspartate 155. Glycine 156 and asparagine 185 together coordinate thiamine diphosphate. Mg(2+) is bound by residues asparagine 185 and leucine 187. Thiamine diphosphate contacts are provided by lysine 247 and histidine 261. Substrate-binding residues include histidine 261 and serine 348. Positions 369 and 395 each coordinate thiamine diphosphate. Catalysis depends on glutamate 369, which acts as the Proton donor. Substrate contacts are provided by histidine 419 and aspartate 427. Position 431 (glutamine 431) interacts with thiamine diphosphate. Residue arginine 477 participates in substrate binding.

This sequence belongs to the transketolase family. In terms of assembly, homodimer. The cofactor is Mg(2+). Ca(2+) is required as a cofactor. Requires Mn(2+) as cofactor. It depends on Co(2+) as a cofactor. Thiamine diphosphate serves as cofactor.

It catalyses the reaction D-sedoheptulose 7-phosphate + D-glyceraldehyde 3-phosphate = aldehydo-D-ribose 5-phosphate + D-xylulose 5-phosphate. Plays an essential role in total transketolase activity and cell proliferation in cancer cells; after transfection with anti-TKTL1 siRNA, total transketolase activity dramatically decreases and proliferation was significantly inhibited in cancer cells. Plays a pivotal role in carcinogenesis. The sequence is that of Transketolase-like protein 2 (TKTL2) from Bos taurus (Bovine).